Consider the following 310-residue polypeptide: Oxygen-dependent coproporphyrinogen-III oxidase (310 aa).

Position 92 (serine 92) interacts with substrate. 2 residues coordinate a divalent metal cation: histidine 96 and histidine 106. Catalysis depends on histidine 106, which acts as the Proton donor. 108 to 110 (NVR) serves as a coordination point for substrate. Residues histidine 145 and histidine 175 each contribute to the a divalent metal cation site. Positions 240-275 (YVEFNLIWDRGTLFGLQSGGRTESILMSMPPLARWE) are important for dimerization. 258–260 (GGR) lines the substrate pocket.

The protein belongs to the aerobic coproporphyrinogen-III oxidase family. In terms of assembly, homodimer. It depends on a divalent metal cation as a cofactor.

The protein localises to the cytoplasm. The enzyme catalyses coproporphyrinogen III + O2 + 2 H(+) = protoporphyrinogen IX + 2 CO2 + 2 H2O. It participates in porphyrin-containing compound metabolism; protoporphyrin-IX biosynthesis; protoporphyrinogen-IX from coproporphyrinogen-III (O2 route): step 1/1. Involved in the heme biosynthesis. Catalyzes the aerobic oxidative decarboxylation of propionate groups of rings A and B of coproporphyrinogen-III to yield the vinyl groups in protoporphyrinogen-IX. This is Oxygen-dependent coproporphyrinogen-III oxidase from Pectobacterium carotovorum subsp. carotovorum (strain PC1).